The primary structure comprises 245 residues: tRNA1(Val) (adenine(37)-N6)-methyltransferase (245 aa).

The protein belongs to the methyltransferase superfamily. tRNA (adenine-N(6)-)-methyltransferase family.

The protein localises to the cytoplasm. The enzyme catalyses adenosine(37) in tRNA1(Val) + S-adenosyl-L-methionine = N(6)-methyladenosine(37) in tRNA1(Val) + S-adenosyl-L-homocysteine + H(+). In terms of biological role, specifically methylates the adenine in position 37 of tRNA(1)(Val) (anticodon cmo5UAC). This Erwinia tasmaniensis (strain DSM 17950 / CFBP 7177 / CIP 109463 / NCPPB 4357 / Et1/99) protein is tRNA1(Val) (adenine(37)-N6)-methyltransferase.